The primary structure comprises 110 residues: UPF0339 protein YegP (110 aa).

2 tandem repeats follow at residues 10-58 (SSDN…RYEK) and 61-109 (ASNG…VKDN).

It belongs to the UPF0339 family. Duplicated subfamily.

In Escherichia coli O6:H1 (strain CFT073 / ATCC 700928 / UPEC), this protein is UPF0339 protein YegP (yegP).